Consider the following 152-residue polypeptide: Putative superoxide dismutase [Cu-Zn] (152 aa).

Positions 43, 45, and 60 each coordinate Cu cation. Cys54 and Cys144 are joined by a disulfide. Positions 60, 68, 77, and 80 each coordinate Zn(2+). Cu cation is bound at residue His118.

This sequence belongs to the Cu-Zn superoxide dismutase family. It depends on Cu cation as a cofactor. Zn(2+) is required as a cofactor.

The catalysed reaction is 2 superoxide + 2 H(+) = H2O2 + O2. In terms of biological role, destroys radicals which are normally produced within the cells and which are toxic to biological systems. This chain is Putative superoxide dismutase [Cu-Zn] (SOD), found in Orgyia pseudotsugata (Douglas-fir tussock moth).